The primary structure comprises 524 residues: Bifunctional purine biosynthesis protein PurH (524 aa).

An MGS-like domain is found at 1-154; the sequence is MTRLALLSTS…KNHAHVTVLC (154 aa).

It belongs to the PurH family.

It carries out the reaction (6R)-10-formyltetrahydrofolate + 5-amino-1-(5-phospho-beta-D-ribosyl)imidazole-4-carboxamide = 5-formamido-1-(5-phospho-D-ribosyl)imidazole-4-carboxamide + (6S)-5,6,7,8-tetrahydrofolate. The catalysed reaction is IMP + H2O = 5-formamido-1-(5-phospho-D-ribosyl)imidazole-4-carboxamide. It functions in the pathway purine metabolism; IMP biosynthesis via de novo pathway; 5-formamido-1-(5-phospho-D-ribosyl)imidazole-4-carboxamide from 5-amino-1-(5-phospho-D-ribosyl)imidazole-4-carboxamide (10-formyl THF route): step 1/1. The protein operates within purine metabolism; IMP biosynthesis via de novo pathway; IMP from 5-formamido-1-(5-phospho-D-ribosyl)imidazole-4-carboxamide: step 1/1. This Acaryochloris marina (strain MBIC 11017) protein is Bifunctional purine biosynthesis protein PurH.